The sequence spans 236 residues: uncharacterized protein (236 aa).

A helical transmembrane segment spans residues 52–72 (FFPYIALFQIIMLIILLILYF). The segment at 183 to 236 (SDKREHDDEELSFTTEMETITTETETSSTIPHLRSLPIKSESSMETTSEETDEE) is disordered. Low complexity predominate over residues 196–212 (TTEMETITTETETSSTI).

The protein localises to the membrane. This is an uncharacterized protein from Acheta domesticus (House cricket).